The chain runs to 249 residues: Coproheme decarboxylase (249 aa).

Residues R131, 145–149 (YPMDK), H172, and Q185 contribute to the Fe-coproporphyrin III site. Y145 is an active-site residue.

It belongs to the ChdC family. Type 1 subfamily. Fe-coproporphyrin III is required as a cofactor.

The enzyme catalyses Fe-coproporphyrin III + 2 H2O2 + 2 H(+) = heme b + 2 CO2 + 4 H2O. The catalysed reaction is Fe-coproporphyrin III + H2O2 + H(+) = harderoheme III + CO2 + 2 H2O. It carries out the reaction harderoheme III + H2O2 + H(+) = heme b + CO2 + 2 H2O. The protein operates within porphyrin-containing compound metabolism; protoheme biosynthesis. Functionally, involved in coproporphyrin-dependent heme b biosynthesis. Catalyzes the decarboxylation of Fe-coproporphyrin III (coproheme) to heme b (protoheme IX), the last step of the pathway. The reaction occurs in a stepwise manner with a three-propionate intermediate. The chain is Coproheme decarboxylase from Staphylococcus epidermidis (strain ATCC 12228 / FDA PCI 1200).